The following is a 3841-amino-acid chain: Transformation/transcription domain-associated protein (3841 aa).

2 disordered regions span residues 491–516 (TPTVTTPALPPPAPPTPVTPAPPPAT) and 2002–2027 (QQPESEADPGSVGEGTSGASAAMKRG). Pro residues predominate over residues 498–515 (ALPPPAPPTPVTPAPPPA). Residues 2025 to 2040 (KRGMSVDSAQDVKRFR) carry the Bipartite nuclear localization signal motif. The FAT domain occupies 2671-3239 (VLKYLGKTHN…YFPIRTLYLT (569 aa)). Residues 3249 to 3271 (KSDSGQQQPSSAAAQTHSASDPG) form a disordered region. Residues 3251-3268 (DSGQQQPSSAAAQTHSAS) are compositionally biased toward low complexity. The 324-residue stretch at 3482-3805 (MPRVEIVQKH…AVTAIMTRLH (324 aa)) folds into the PI3K/PI4K catalytic domain. Residues 3488 to 3494 (VQKHNTA) are G-loop. The interval 3669–3677 (HLNRLNPEM) is catalytic loop. Residues 3689–3714 (VSYFRFDINDATGDLDANRPVPFRLT) are activation loop. In terms of domain architecture, FATC spans 3809–3841 (QFEGGESKVNTLVAAANSLDNLCRMDPAWHPWL).

It belongs to the PI3/PI4-kinase family. TRA1 subfamily.

It is found in the nucleus. Its function is as follows. Adapter protein, which is found in various multiprotein chromatin complexes with histone acetyltransferase activity (HAT), which gives a specific tag for epigenetic transcription activation. May be required for the mitotic checkpoint and normal cell cycle progression. May play a role in the formation and maintenance of the auditory system. This chain is Transformation/transcription domain-associated protein, found in Danio rerio (Zebrafish).